The chain runs to 191 residues: SCO2-like protein RP031 (191 aa).

Belongs to the SCO1/2 family.

The sequence is that of SCO2-like protein RP031 from Rickettsia prowazekii (strain Madrid E).